The chain runs to 160 residues: Nucleotide-binding protein CPS_1098 (160 aa).

It belongs to the YajQ family.

Nucleotide-binding protein. This chain is Nucleotide-binding protein CPS_1098, found in Colwellia psychrerythraea (strain 34H / ATCC BAA-681) (Vibrio psychroerythus).